A 501-amino-acid chain; its full sequence is Lysine--tRNA ligase (501 aa).

Mg(2+) is bound by residues Glu-412 and Glu-419.

Belongs to the class-II aminoacyl-tRNA synthetase family. Homodimer. Requires Mg(2+) as cofactor.

It localises to the cytoplasm. It catalyses the reaction tRNA(Lys) + L-lysine + ATP = L-lysyl-tRNA(Lys) + AMP + diphosphate. This Pasteurella multocida (strain Pm70) protein is Lysine--tRNA ligase (lysS).